We begin with the raw amino-acid sequence, 342 residues long: Succinylglutamate desuccinylase (342 aa).

Residues His-63, Glu-66, and His-159 each coordinate Zn(2+). Glu-222 is an active-site residue.

It belongs to the AspA/AstE family. Succinylglutamate desuccinylase subfamily. Zn(2+) is required as a cofactor.

The catalysed reaction is N-succinyl-L-glutamate + H2O = L-glutamate + succinate. Its pathway is amino-acid degradation; L-arginine degradation via AST pathway; L-glutamate and succinate from L-arginine: step 5/5. Functionally, transforms N(2)-succinylglutamate into succinate and glutamate. This Paraburkholderia xenovorans (strain LB400) protein is Succinylglutamate desuccinylase.